Here is a 1841-residue protein sequence, read N- to C-terminus: Cell division control protein 12 (1841 aa).

Polar residues-rich tracts occupy residues 1 to 25 and 46 to 63; these read MRNS…TPSA and SIES…QSVT. 3 disordered regions span residues 1–63, 78–134, and 152–181; these read MRNS…QSVT, NSHN…GPRL, and PPVH…RTKH. Positions 232 to 620 constitute a GBD/FH3 domain; that stretch reads TRPPSLDQLI…RILLNSKVSN (389 aa). A coiled-coil region spans residues 674–715; that stretch reads LGAEDLIAKLNKEVEDQKDVILSQKRTNETLKTEIDALQKSH. One can recognise an FH1 domain in the interval 740–972; it reads GSTNSKERII…VSPAVSNNIS (233 aa). The FH2 domain maps to 980 to 1391; that stretch reads TGLTRRPTRR…QHRRLNLVNN (412 aa). Positions 1260-1290 form a coiled coil; it reads TEAAKLNIEAIEQECSELIRGCQNLQIDCDS. 3 disordered regions span residues 1445–1661, 1696–1715, and 1735–1758; these read EAPN…ENNL, TTTT…INTI, and KSNK…GSNK. Polar residues-rich tracts occupy residues 1447-1456 and 1483-1497; these read PNTSTKSSPA and SEST…NITP. The segment covering 1499–1516 has biased composition (basic and acidic residues); that stretch reads KKGEVSSKAKKGYNYEKR. A compositionally biased stretch (polar residues) spans 1539–1553; sequence GRSASYTFSDPSSLE. S1541 carries the post-translational modification Phosphoserine. Y1544 carries the phosphotyrosine modification. Residues 1554-1567 show a composition bias toward basic and acidic residues; that stretch reads DSNRQKPFNGEKFR. Residues 1568-1577 show a composition bias toward basic residues; that stretch reads RFSSKSRRGS. The span at 1594–1604 shows a compositional bias: polar residues; it reads INNNQTSPQNK. Basic and acidic residues predominate over residues 1605-1621; the sequence is PSKESLKSDTISNEKKV. The span at 1630-1641 shows a compositional bias: polar residues; that stretch reads NLLTPTISNGTR.

Belongs to the formin homology family. BNI1 subfamily. As to quaternary structure, interacts with profilin and actin at the FH1 and FH2 domains respectively.

Its subcellular location is the nucleus. In terms of biological role, plays a role in the cell cycle. Involved in cytokinesis. Component of the cell division ring. In the absence of profilin, caps the barbed end of actin filaments, thus preventing subunit addition and dissociation. In the presence of profilin, nucleates actin filaments that grow rapidly from their barbed ends. This chain is Cell division control protein 12 (cdc12), found in Schizosaccharomyces pombe (strain 972 / ATCC 24843) (Fission yeast).